The primary structure comprises 227 residues: Cytochrome c oxidase subunit 2 (227 aa).

Over 1-14 (MAYPFQLGLQDASS) the chain is Mitochondrial intermembrane. A helical membrane pass occupies residues 15-45 (PIMEELMNFHDHTLMIVFLISSLVLYLMALM). The Mitochondrial matrix segment spans residues 46–59 (LSTKLIHTSTMDAQ). A helical membrane pass occupies residues 60–87 (EVETIWTILPAIILIMIALPSLRILYMM). Over 88–227 (DEINNPILTV…LFENWSMSMT (140 aa)) the chain is Mitochondrial intermembrane. The Cu cation site is built by His161, Cys196, Glu198, Cys200, His204, and Met207. Glu198 lines the Mg(2+) pocket.

Belongs to the cytochrome c oxidase subunit 2 family. As to quaternary structure, component of the cytochrome c oxidase (complex IV, CIV), a multisubunit enzyme composed of 14 subunits. The complex is composed of a catalytic core of 3 subunits MT-CO1, MT-CO2 and MT-CO3, encoded in the mitochondrial DNA, and 11 supernumerary subunits COX4I, COX5A, COX5B, COX6A, COX6B, COX6C, COX7A, COX7B, COX7C, COX8 and NDUFA4, which are encoded in the nuclear genome. The complex exists as a monomer or a dimer and forms supercomplexes (SCs) in the inner mitochondrial membrane with NADH-ubiquinone oxidoreductase (complex I, CI) and ubiquinol-cytochrome c oxidoreductase (cytochrome b-c1 complex, complex III, CIII), resulting in different assemblies (supercomplex SCI(1)III(2)IV(1) and megacomplex MCI(2)III(2)IV(2)). Found in a complex with TMEM177, COA6, COX18, COX20, SCO1 and SCO2. Interacts with TMEM177 in a COX20-dependent manner. Interacts with COX20. Interacts with COX16. Cu cation is required as a cofactor.

The protein resides in the mitochondrion inner membrane. It carries out the reaction 4 Fe(II)-[cytochrome c] + O2 + 8 H(+)(in) = 4 Fe(III)-[cytochrome c] + 2 H2O + 4 H(+)(out). Functionally, component of the cytochrome c oxidase, the last enzyme in the mitochondrial electron transport chain which drives oxidative phosphorylation. The respiratory chain contains 3 multisubunit complexes succinate dehydrogenase (complex II, CII), ubiquinol-cytochrome c oxidoreductase (cytochrome b-c1 complex, complex III, CIII) and cytochrome c oxidase (complex IV, CIV), that cooperate to transfer electrons derived from NADH and succinate to molecular oxygen, creating an electrochemical gradient over the inner membrane that drives transmembrane transport and the ATP synthase. Cytochrome c oxidase is the component of the respiratory chain that catalyzes the reduction of oxygen to water. Electrons originating from reduced cytochrome c in the intermembrane space (IMS) are transferred via the dinuclear copper A center (CU(A)) of subunit 2 and heme A of subunit 1 to the active site in subunit 1, a binuclear center (BNC) formed by heme A3 and copper B (CU(B)). The BNC reduces molecular oxygen to 2 water molecules using 4 electrons from cytochrome c in the IMS and 4 protons from the mitochondrial matrix. In Gerbillus gerbillus (Lesser Egyptian gerbil), this protein is Cytochrome c oxidase subunit 2 (MT-CO2).